The sequence spans 150 residues: Large-conductance mechanosensitive channel (150 aa).

2 helical membrane passes run 14–34 (VIDL…VTSF) and 81–101 (GVFL…FLVV).

The protein belongs to the MscL family. In terms of assembly, homopentamer.

Its subcellular location is the cell membrane. Channel that opens in response to stretch forces in the membrane lipid bilayer. May participate in the regulation of osmotic pressure changes within the cell. The polypeptide is Large-conductance mechanosensitive channel (Syntrophomonas wolfei subsp. wolfei (strain DSM 2245B / Goettingen)).